The following is a 212-amino-acid chain: Thymidylate kinase (212 aa).

10-17 serves as a coordination point for ATP; that stretch reads GPDGAGKT.

This sequence belongs to the thymidylate kinase family.

It catalyses the reaction dTMP + ATP = dTDP + ADP. Functionally, phosphorylation of dTMP to form dTDP in both de novo and salvage pathways of dTTP synthesis. This chain is Thymidylate kinase, found in Lactobacillus delbrueckii subsp. bulgaricus (strain ATCC 11842 / DSM 20081 / BCRC 10696 / JCM 1002 / NBRC 13953 / NCIMB 11778 / NCTC 12712 / WDCM 00102 / Lb 14).